Consider the following 65-residue polypeptide: Chymotrypsin/elastase isoinhibitors 2 to 5 (65 aa).

5 disulfides stabilise this stretch: Cys4/Cys37, Cys13/Cys32, Cys16/Cys28, Cys20/Cys59, and Cys39/Cys53. A TIL domain is found at 4–59; it reads CGKNEVWTECTGCELKCGQDEKTPCALMCRPPSCECTPGRGMRRTHDGKCVPVSEC.

Belongs to the serine protease inhibitor-like (TIL domain-containing) family.

The protein resides in the secreted. Defends the organism against the host's proteinases. The chain is Chymotrypsin/elastase isoinhibitors 2 to 5 from Ascaris suum (Pig roundworm).